The primary structure comprises 60 residues: Small ribosomal subunit protein bS21 (60 aa).

A disordered region spans residues 36-60 (QFFETPQEKHKRKEATRRRQRSRRR). Over residues 44–60 (KHKRKEATRRRQRSRRR) the composition is skewed to basic residues.

The protein belongs to the bacterial ribosomal protein bS21 family.

The sequence is that of Small ribosomal subunit protein bS21 (rpsU) from Synechocystis sp. (strain ATCC 27184 / PCC 6803 / Kazusa).